The primary structure comprises 172 residues: Peptidyl-prolyl cis-trans isomerase CYP18-4 (172 aa).

The PPIase cyclophilin-type domain occupies 7 to 170 (FFDMSLSGTP…KVVTITDCGQ (164 aa)).

Belongs to the cyclophilin-type PPIase family. As to quaternary structure, interacts with A.tumefaciens VirD2. Ubiquitous, with higher levels in roots and flowers. Confined to vascular tissues. Also detected in stigmas, base of siliques and anthers.

The protein localises to the cytoplasm. The enzyme catalyses [protein]-peptidylproline (omega=180) = [protein]-peptidylproline (omega=0). Binds cyclosporin A (CsA). CsA mediates some of its effects via an inhibitory action on PPIase. PPIases accelerate the folding of proteins. It catalyzes the cis-trans isomerization of proline imidic peptide bonds in oligopeptides. In Arabidopsis thaliana (Mouse-ear cress), this protein is Peptidyl-prolyl cis-trans isomerase CYP18-4 (CYP18-4).